The sequence spans 314 residues: Acetaldehyde dehydrogenase 2 (314 aa).

11 to 14 (SGNI) is an NAD(+) binding site. Catalysis depends on C129, which acts as the Acyl-thioester intermediate. Residues 160–168 (SAGPGTRAN) and N291 contribute to the NAD(+) site.

Belongs to the acetaldehyde dehydrogenase family.

It catalyses the reaction acetaldehyde + NAD(+) + CoA = acetyl-CoA + NADH + H(+). The polypeptide is Acetaldehyde dehydrogenase 2 (Rhodococcus erythropolis (strain PR4 / NBRC 100887)).